A 212-amino-acid polypeptide reads, in one-letter code: Imidazole glycerol phosphate synthase subunit HisH 2 (212 aa).

The Glutamine amidotransferase type-1 domain occupies 4-211 (HLGLIDYGMG…LDWLQRGAPI (208 aa)). Residue Cys-82 is the Nucleophile of the active site. Residues His-186 and Glu-188 contribute to the active site.

As to quaternary structure, heterodimer of HisH and HisF.

It localises to the cytoplasm. It catalyses the reaction 5-[(5-phospho-1-deoxy-D-ribulos-1-ylimino)methylamino]-1-(5-phospho-beta-D-ribosyl)imidazole-4-carboxamide + L-glutamine = D-erythro-1-(imidazol-4-yl)glycerol 3-phosphate + 5-amino-1-(5-phospho-beta-D-ribosyl)imidazole-4-carboxamide + L-glutamate + H(+). The catalysed reaction is L-glutamine + H2O = L-glutamate + NH4(+). The protein operates within amino-acid biosynthesis; L-histidine biosynthesis; L-histidine from 5-phospho-alpha-D-ribose 1-diphosphate: step 5/9. Its function is as follows. IGPS catalyzes the conversion of PRFAR and glutamine to IGP, AICAR and glutamate. The HisH subunit provides the glutamine amidotransferase activity that produces the ammonia necessary to HisF for the synthesis of IGP and AICAR. The sequence is that of Imidazole glycerol phosphate synthase subunit HisH 2 (hisH2) from Parasynechococcus marenigrum (strain WH8102).